A 79-amino-acid chain; its full sequence is Putative defensin-like protein 146 (79 aa).

Positions 1 to 25 (MMKNQFQLSLIILTFFILLELGVMG) are cleaved as a signal peptide. 4 cysteine pairs are disulfide-bonded: C35/C78, C46/C66, C51/C72, and C55/C74.

It belongs to the DEFL family.

The protein resides in the secreted. In Arabidopsis thaliana (Mouse-ear cress), this protein is Putative defensin-like protein 146 (LCR9).